Here is a 101-residue protein sequence, read N- to C-terminus: Putative metal transport protein HQ_3622A (101 aa).

The N-terminal stretch at methionine 1–threonine 32 is a signal peptide. The helical transmembrane segment at isoleucine 75–alanine 95 threads the bilayer.

Its subcellular location is the cell membrane. Functionally, may be involved in metal transport. The chain is Putative metal transport protein HQ_3622A from Haloquadratum walsbyi (strain DSM 16790 / HBSQ001).